We begin with the raw amino-acid sequence, 405 residues long: Putative phosphate permease PYRAB14010 (405 aa).

The next 11 membrane-spanning stretches (helical) occupy residues 3–23, 44–64, 82–102, 114–134, 138–158, 181–201, 207–227, 264–284, 287–307, 329–349, and 384–404; these read MDPW…AIGA, AVLI…KTVT, VLVY…VIAT, IIGG…VNWG, SVVL…FFIF, VWIG…VLHG, GVLK…SMIL, VANA…GMAG, VPVP…GVAT, FTID…GMPI, and FVTV…LWIV.

Belongs to the inorganic phosphate transporter (PiT) (TC 2.A.20) family.

It localises to the cell membrane. Its function is as follows. Potential transporter for phosphate. The sequence is that of Putative phosphate permease PYRAB14010 from Pyrococcus abyssi (strain GE5 / Orsay).